The following is a 236-amino-acid chain: Ubiquinone biosynthesis O-methyltransferase (236 aa).

Residues arginine 40, glycine 59, aspartate 80, and leucine 124 each coordinate S-adenosyl-L-methionine.

Belongs to the methyltransferase superfamily. UbiG/COQ3 family.

The catalysed reaction is a 3-demethylubiquinol + S-adenosyl-L-methionine = a ubiquinol + S-adenosyl-L-homocysteine + H(+). The enzyme catalyses a 3-(all-trans-polyprenyl)benzene-1,2-diol + S-adenosyl-L-methionine = a 2-methoxy-6-(all-trans-polyprenyl)phenol + S-adenosyl-L-homocysteine + H(+). Its pathway is cofactor biosynthesis; ubiquinone biosynthesis. O-methyltransferase that catalyzes the 2 O-methylation steps in the ubiquinone biosynthetic pathway. This Nitrosococcus oceani (strain ATCC 19707 / BCRC 17464 / JCM 30415 / NCIMB 11848 / C-107) protein is Ubiquinone biosynthesis O-methyltransferase.